The following is a 542-amino-acid chain: Homeobox and leucine zipper protein Homez (542 aa).

A DNA-binding region (homeobox 1) is located at residues 55-114 (WTQAIQTSELDGNEHLLQAFSYFPYPSLADIALLCLRHGLQMEKVKTWFMAQRLRCGISW). The segment at 165–193 (LSPLAPSEQPTHMKGLKVEPEEPSQVSQL) is disordered. Residues lysine 181 and lysine 201 each participate in a glycyl lysine isopeptide (Lys-Gly) (interchain with G-Cter in SUMO2) cross-link. The tract at residues 250–307 (VHQPDKPASVSLLDNSCKEESEPSGIPPSSSTSSPSFQALANGTTATPKPLQPLGCIS) is disordered. The span at 272-285 (PSGIPPSSSTSSPS) shows a compositional bias: low complexity. Residues 286–296 (FQALANGTTAT) are compositionally biased toward polar residues. The residue at position 345 (serine 345) is a Phosphoserine. 2 consecutive DNA-binding regions (homeobox) follow at residues 349-409 (QHQR…KHGQ) and 443-502 (TPPL…AEVV). The Nuclear localization signal signature appears at 352-357 (RKTKRK). 2 disordered regions span residues 424–454 (FQDP…PPPD) and 501–542 (VVVC…IIWD). Phosphothreonine is present on threonine 443. Residues 444–454 (PPLPAPPPPPD) show a composition bias toward pro residues. Positions 505–542 (LDEEDEEDEEDELPEDGEEEEEEEEDDDDGDDDVIIWD) are enriched in acidic residues.

In terms of assembly, homodimer or heterodimer (Potential). Interacts with HOXC8. Ubiquitous. Strongly expressed in testis.

The protein localises to the nucleus. May function as a transcriptional regulator. This is Homeobox and leucine zipper protein Homez (Homez) from Mus musculus (Mouse).